We begin with the raw amino-acid sequence, 181 residues long: MIQDSEFFRMEGVPITKEEIRAVSIGKLNLDPEDVVLDIGCGSGGMSVEISKRSKFVYSIDNSEDAKNTTLNNLKKFNVENCTVSLGNAEDLISKFDFNKVFIGGTQNIEQILEILKEKNIERIVVNTIVLENSVKIINKFEELGYNVDFVNVSVSYGKKINSGHIMLSKNPITIITATLK.

S-adenosyl-L-methionine-binding positions include Thr16, 40–44, Asp61, and Ala89; that span reads GCGSG.

The protein belongs to the methyltransferase superfamily. Archaeal-type CbiT family.

The catalysed reaction is Co-precorrin-6B + S-adenosyl-L-methionine = Co-precorrin-7 + S-adenosyl-L-homocysteine + CO2. It participates in cofactor biosynthesis; adenosylcobalamin biosynthesis; cob(II)yrinate a,c-diamide from sirohydrochlorin (anaerobic route): step 8/10. Its function is as follows. Catalyzes the methylation of C-15 in cobalt-precorrin-6B followed by the decarboxylation of C-12 to form cobalt-precorrin-7. The protein is Probable cobalt-precorrin-6B C(15)-methyltransferase (decarboxylating) of Methanococcus maripaludis (strain DSM 14266 / JCM 13030 / NBRC 101832 / S2 / LL).